Here is a 123-residue protein sequence, read N- to C-terminus: Large ribosomal subunit protein uL29 (123 aa).

It belongs to the universal ribosomal protein uL29 family. Component of the large ribosomal subunit.

Its subcellular location is the cytoplasm. Functionally, component of the large ribosomal subunit. The ribosome is a large ribonucleoprotein complex responsible for the synthesis of proteins in the cell. This is Large ribosomal subunit protein uL29 (rpl35) from Platichthys flesus (European flounder).